Consider the following 156-residue polypeptide: Arginine repressor (156 aa).

Belongs to the ArgR family.

It is found in the cytoplasm. Its pathway is amino-acid biosynthesis; L-arginine biosynthesis [regulation]. Functionally, regulates arginine biosynthesis genes. The protein is Arginine repressor of Vibrio atlanticus (strain LGP32) (Vibrio splendidus (strain Mel32)).